Here is a 57-residue protein sequence, read N- to C-terminus: Granulin-2 (57 aa).

2 disulfides stabilise this stretch: cysteine 4–cysteine 16 and cysteine 10–cysteine 26.

This sequence belongs to the granulin family. In terms of processing, granulins are disulfide bridged. Ubiquitous.

The protein resides in the secreted. In terms of biological role, granulins have possible cytokine-like activity. They may play a role in inflammation, wound repair, and tissue remodeling. This Cyprinus carpio (Common carp) protein is Granulin-2.